The primary structure comprises 102 residues: MYKADYKQIAATPSFQAFLKQKRAFIVPSAIFFFVFYFSLPVLTSYFTFLNAPAIGAVSWAWLFAIAQFAMTWILSTVYSRRAAHFDKYVSALKEDLKGEQT.

A run of 2 helical transmembrane segments spans residues 24–44 and 55–75; these read AFIV…PVLT and IGAV…TWIL.

It is found in the cell membrane. This is an uncharacterized protein from Bacillus subtilis (strain 168).